We begin with the raw amino-acid sequence, 253 residues long: Isopentenyl-diphosphate delta-isomerase IDI1 (253 aa).

A substrate-binding site is contributed by Lys61. Residues His65 and His76 each contribute to the Mg(2+) site. In terms of domain architecture, Nudix hydrolase spans 74 to 224; sequence LLHRAFSVFL…SLVFTPWFKL (151 aa). Substrate is bound by residues Gln94 and Lys99. The active site involves Cys111. Substrate is bound at residue Ser112. The Nudix box motif lies at 112-145; sequence SHPLHIPTETGSTLEDSIAGVKRAAQRKLEHELG. Glu174 and Glu176 together coordinate Mg(2+). Residue Glu176 is part of the active site.

It belongs to the IPP isomerase type 1 family. Mg(2+) serves as cofactor.

It catalyses the reaction isopentenyl diphosphate = dimethylallyl diphosphate. It participates in isoprenoid biosynthesis; dimethylallyl diphosphate biosynthesis; dimethylallyl diphosphate from isopentenyl diphosphate: step 1/1. Functionally, isopentenyl-diphosphate delta-isomerase; part of the second module of ergosterol biosynthesis pathway that includes the middle steps of the pathway. IDI1 catalyzes the 1,3-allylic rearrangement of isopentenyl (IPP) to its highly electrophilic allylic isomer, dimethylallyl diphosphate (DMAPP). The second module is carried out in the vacuole and involves the formation of farnesyl diphosphate, which is also an important intermediate in the biosynthesis of ubiquinone, dolichol, heme and prenylated proteins. Activity by the mevalonate kinase ERG12 (FG05912) first converts mevalonate into 5-phosphomevalonate. 5-phosphomevalonate is then further converted to 5-diphosphomevalonate by the phosphomevalonate kinase ERG8 (FG09764). The diphosphomevalonate decarboxylase ERG19 (FG10424) then produces isopentenyl diphosphate. The isopentenyl-diphosphate delta-isomerase IDI1 (FG09722) then catalyzes the 1,3-allylic rearrangement of the homoallylic substrate isopentenyl (IPP) to its highly electrophilic allylic isomer, dimethylallyl diphosphate (DMAPP). Finally the farnesyl diphosphate synthase ERG20 (FG06784) catalyzes the sequential condensation of isopentenyl pyrophosphate with dimethylallyl pyrophosphate, and then with the resultant geranylpyrophosphate to the ultimate product farnesyl pyrophosphate. This chain is Isopentenyl-diphosphate delta-isomerase IDI1, found in Gibberella zeae (strain ATCC MYA-4620 / CBS 123657 / FGSC 9075 / NRRL 31084 / PH-1) (Wheat head blight fungus).